The sequence spans 458 residues: Phosphoglucosamine mutase (458 aa).

The active-site Phosphoserine intermediate is Ser-108. Positions 108, 247, 249, and 251 each coordinate Mg(2+). Phosphoserine is present on Ser-108.

This sequence belongs to the phosphohexose mutase family. Mg(2+) serves as cofactor. Activated by phosphorylation.

The enzyme catalyses alpha-D-glucosamine 1-phosphate = D-glucosamine 6-phosphate. Functionally, catalyzes the conversion of glucosamine-6-phosphate to glucosamine-1-phosphate. The chain is Phosphoglucosamine mutase from Nitrosomonas eutropha (strain DSM 101675 / C91 / Nm57).